The following is a 268-amino-acid chain: Indole-3-glycerol phosphate synthase (268 aa).

It belongs to the TrpC family.

It carries out the reaction 1-(2-carboxyphenylamino)-1-deoxy-D-ribulose 5-phosphate + H(+) = (1S,2R)-1-C-(indol-3-yl)glycerol 3-phosphate + CO2 + H2O. It functions in the pathway amino-acid biosynthesis; L-tryptophan biosynthesis; L-tryptophan from chorismate: step 4/5. This Magnetococcus marinus (strain ATCC BAA-1437 / JCM 17883 / MC-1) protein is Indole-3-glycerol phosphate synthase.